Consider the following 106-residue polypeptide: A-type ATP synthase subunit F (106 aa).

It belongs to the V-ATPase F subunit family. As to quaternary structure, has multiple subunits with at least A(3), B(3), C, D, E, F, H, I and proteolipid K(x).

It localises to the cell membrane. Its function is as follows. Component of the A-type ATP synthase that produces ATP from ADP in the presence of a proton gradient across the membrane. The polypeptide is A-type ATP synthase subunit F (Methanosphaera stadtmanae (strain ATCC 43021 / DSM 3091 / JCM 11832 / MCB-3)).